A 21-amino-acid chain; its full sequence is Protein YnfR (21 aa).

The chain is Protein YnfR from Escherichia coli (strain K12).